The chain runs to 31 residues: Elongation factor Tu (31 aa).

Belongs to the GTP-binding elongation factor family. EF-Tu/EF-1A subfamily. In terms of assembly, monomer.

It localises to the cytoplasm. This protein promotes the GTP-dependent binding of aminoacyl-tRNA to the A-site of ribosomes during protein biosynthesis. The sequence is that of Elongation factor Tu (tuf) from Streptomyces laurentii.